The following is a 1135-amino-acid chain: Envelopment polyprotein (1135 aa).

Positions 1–35 (MRILKLLELVVKVSLFTIALSSVLLAFLIFRATDA) are cleaved as a signal peptide. The Lumenal segment spans residues 36 to 314 (KVEIIRGDHP…KYSKSIYKQT (279 aa)). Positions 41-43 (RGD) match the Cell attachment site motif. Intrachain disulfides connect C114-C145 and C122-C156. An N-linked (GlcNAc...) asparagine; by host glycan is attached at N116. Positions 177–195 (LDKKRHFSVGGKFFISESL) are non-covalent dimerization. Residue N210 is glycosylated (N-linked (GlcNAc...) asparagine; by host). Residues C224 and C285 are joined by a disulfide bond. Residues 315–366 (ACINFSWIRLILIALLIYFPIRWLVNKTTKPLFLWYDLMGLITYPVLLLINC) form a helical membrane-spanning segment. At 367–484 (LWKYFPLKCS…VPGCPFLVTS (118 aa)) the chain is on the cytoplasmic side. The segment at 437-484 (LSLSLLKFVTEILIGLVILSQMPMSMAQTTQCLSGCFYVPGCPFLVTS) is signal for signal peptide peptidase. The Lumenal segment spans residues 485 to 1067 (KFEKCSEKDQ…YFGSFFDTIR (583 aa)). N-linked (GlcNAc...) asparagine; by host glycans are attached at residues N605 and N980. The helical transmembrane segment at 1068 to 1088 (VVLLIAFIFLVTYFCSILTSI) threads the bilayer. Topologically, residues 1089-1135 (CKGYVKNESYKSRSKIEDDDEPEIKAPMLMKDTMTRRRPPMDFSHLV) are cytoplasmic.

The protein belongs to the tospovirus envelope glycoprotein family. In terms of assembly, homodimer; disulfide-linked. Heterodimer with Glycoprotein C. Interacts with nucleoprotein. As to quaternary structure, heterodimer with Glycoprotein N. Interacts with nucleoprotein. Post-translationally, specific enzymatic cleavages in vivo yield mature proteins including Glycoprotein N and Glycoprotein C. In terms of processing, glycosylated with O-linked glycans. Glycosylation is essential for proper subcellular location. Cleaved at acidic pH.

The protein resides in the virion membrane. It is found in the host Golgi apparatus membrane. The protein localises to the host endoplasmic reticulum membrane. Its function is as follows. Forms the spikes present at the surface of the virion together with Glycoprotein C. They are able to attach the virion to a cell receptor and to promote fusion of membranes after endocytosis of the virion. Plays a role in virus binding and/or entry into the vector midgut. Functionally, forms the spikes present at the surface of the virion together with Glycoprotein N. They are able to attach the virion to a cell receptor and to promote fusion of membranes after endocytosis of the virion. Probable class II fusion protein. This Tomato spotted wilt virus (strain Brazilian Br-01) (TSWV) protein is Envelopment polyprotein (GP).